Reading from the N-terminus, the 247-residue chain is Probable chemoreceptor glutamine deamidase CheD (247 aa).

The segment at 204–247 is disordered; that stretch reads KRPAAPQPARPRIELFGGRGTTPGAGSQAAGSPYAANLSRKQEA.

The protein belongs to the CheD family.

It carries out the reaction L-glutaminyl-[protein] + H2O = L-glutamyl-[protein] + NH4(+). Its function is as follows. Probably deamidates glutamine residues to glutamate on methyl-accepting chemotaxis receptors (MCPs), playing an important role in chemotaxis. The sequence is that of Probable chemoreceptor glutamine deamidase CheD from Burkholderia orbicola (strain MC0-3).